Consider the following 183-residue polypeptide: Transmembrane and coiled-coil domain-containing protein 2 (183 aa).

The helical transmembrane segment at 54 to 74 (VQIILGISFLTLLAIGLFALW) threads the bilayer. Residues 127–150 (GLQEKILKKLQMVENKVRDLEGII) adopt a coiled-coil conformation.

The protein resides in the membrane. The protein is Transmembrane and coiled-coil domain-containing protein 2 (Tmco2) of Mus musculus (Mouse).